The primary structure comprises 297 residues: ATP synthase F(1) complex subunit gamma, mitochondrial (297 aa).

The N-terminal 25 residues, methionine 1 to methionine 25, are a transit peptide targeting the mitochondrion. An N6-acetyllysine modification is found at lysine 39. Lysine 49 carries the N6-succinyllysine modification. N6-acetyllysine is present on lysine 55. N6-acetyllysine; alternate is present on lysine 115. N6-succinyllysine; alternate is present on lysine 115. A Phosphoserine modification is found at serine 146. Residue lysine 154 is modified to N6-acetyllysine; alternate. Lysine 154 is subject to N6-succinyllysine; alternate. Position 197 is an N6-acetyllysine (lysine 197). Lysine 270 carries the post-translational modification N6-succinyllysine.

Belongs to the ATPase gamma chain family. Component of the ATP synthase complex composed at least of ATP5F1A/subunit alpha, ATP5F1B/subunit beta, ATP5MC1/subunit c (homooctomer), MT-ATP6/subunit a, MT-ATP8/subunit 8, ATP5ME/subunit e, ATP5MF/subunit f, ATP5MG/subunit g, ATP5MK/subunit k, ATP5MJ/subunit j, ATP5F1C/subunit gamma, ATP5F1D/subunit delta, ATP5F1E/subunit epsilon, ATP5PF/subunit F6, ATP5PB/subunit b, ATP5PD/subunit d, ATP5PO/subunit OSCP. ATP synthase complex consists of a soluble F(1) head domain (subunits alpha(3) and beta(3)) - the catalytic core - and a membrane F(0) domain - the membrane proton channel (subunits c, a, 8, e, f, g, k and j). These two domains are linked by a central stalk (subunits gamma, delta, and epsilon) rotating inside the F1 region and a stationary peripheral stalk (subunits F6, b, d, and OSCP). Interacts with FLVCR2; this interaction occurs in the absence of heme and is disrupted upon heme binding.

The protein resides in the mitochondrion inner membrane. Functionally, subunit gamma, of the mitochondrial membrane ATP synthase complex (F(1)F(0) ATP synthase or Complex V) that produces ATP from ADP in the presence of a proton gradient across the membrane which is generated by electron transport complexes of the respiratory chain. ATP synthase complex consist of a soluble F(1) head domain - the catalytic core - and a membrane F(1) domain - the membrane proton channel. These two domains are linked by a central stalk rotating inside the F(1) region and a stationary peripheral stalk. During catalysis, ATP synthesis in the catalytic domain of F(1) is coupled via a rotary mechanism of the central stalk subunits to proton translocation. In vivo, can only synthesize ATP although its ATP hydrolase activity can be activated artificially in vitro. With the central stalk subunit delta, is essential for the biogenesis of F(1) catalytic part of the ATP synthase complex namely in the formation of F1 assembly intermediate. The protein is ATP synthase F(1) complex subunit gamma, mitochondrial of Pongo abelii (Sumatran orangutan).